We begin with the raw amino-acid sequence, 294 residues long: MAGTRLLIVTGLSGAGKTQAVRCLEDLGFFCVDNLPPKLIPKFAELCAQTTGKIERIALVVDIRGGEFFATVLDVLKDLKNQGLRYEILYLEASNETLVRRFKESRRPHPLSTSGEIVEGIEAERLALRELRGLAHKIIDTSNFSVAQLKQEIANLYGGNEDRERLAITAVSFGYKYGIPLDADLVIDVRFLPNPHYEPQLQPLTGLDEPVREYVFEAPTTSEFLSHLVNLFDFLIPQYIREGKTTLTLAIGCTGGKHRSVVLADWLGEQLRERKHRIVVRHRDLGRDVSGTNY.

Residue 11–18 (GLSGAGKT) coordinates ATP. 62-65 (DIRG) contacts GTP.

This sequence belongs to the RapZ-like family.

Displays ATPase and GTPase activities. The sequence is that of Nucleotide-binding protein Daud_0300 from Desulforudis audaxviator (strain MP104C).